A 370-amino-acid polypeptide reads, in one-letter code: UDP-galactose transporter homolog 1 (370 aa).

10 helical membrane-spanning segments follow: residues 22–42 (ALTL…WSIL), 62–82 (IIIN…YNYV), 115–135 (CNVL…SPIG), 145–165 (LAYL…HFIF), 175–195 (YLVA…HVTT), 204–224 (TLLG…TNST), 242–262 (LMSL…IIFH), 280–300 (LIDI…IFII), 307–327 (IILI…SVIL), and 333–353 (SWEQ…EAFI).

Belongs to the nucleotide-sugar transporter family. SLC35B subfamily.

The protein localises to the endoplasmic reticulum membrane. Functionally, may be involved in specific transport of UDP-Gal from the cytosol to the Golgi lumen. Involved in the maintenance of optimal conditions for the folding of secretory pathway proteins in the endoplasmic reticulum. This chain is UDP-galactose transporter homolog 1 (HUT1), found in Candida albicans (strain SC5314 / ATCC MYA-2876) (Yeast).